Here is a 1097-residue protein sequence, read N- to C-terminus: Apolipoprotein B receptor (1097 aa).

Disordered stretches follow at residues 64–249 (QEDL…KGEE), 262–376 (AWGT…WTTS), 410–739 (EEEG…SRRG), 789–866 (GWDS…ARAE), and 889–1097 (VGWQ…PKPQ). Composition is skewed to basic and acidic residues over residues 83-92 (GPGDDRRHEV), 158-177 (ERQE…RSWE), and 185-208 (VRAR…ETEG). The span at 209–218 (KAGAVGPKAA) shows a compositional bias: low complexity. Composition is skewed to basic and acidic residues over residues 219-232 (GDNR…READ) and 279-302 (GREE…EEAR). The span at 312–330 (TASGGEEAETASGGEEAGT) shows a compositional bias: low complexity. Residues 331-362 (ASGGEEAGIASGGEAGTASGGEEAGTASGGEE) show a composition bias toward gly residues. At serine 458 the chain carries Phosphoserine. Basic and acidic residues-rich tracts occupy residues 463–487 (VDLR…RMEE) and 496–505 (EERGSSRDPV). Phosphoserine is present on serine 510. Threonine 572 carries the post-translational modification Phosphothreonine. Serine 594 is modified (phosphoserine). Composition is skewed to basic and acidic residues over residues 594 to 606 (SKEE…EAGP) and 626 to 637 (NRTRKDMERGNT). Residues 640 to 652 (DAADGEQREEEET) are compositionally biased toward acidic residues. Composition is skewed to basic and acidic residues over residues 791 to 800 (DSKEKEEAAA), 892 to 918 (QERE…RLLD), and 928 to 950 (RRAE…EEQP). A compositionally biased stretch (basic residues) spans 1000 to 1017 (SRVHLSRSSSQRRSRPSF). Residues 1041–1050 (APEQRPLQLE) are compositionally biased toward low complexity.

In terms of assembly, homodimer. Post-translationally, there are 2 forms in macrophages, the membrane-binding proteins 200 kDa (MBP 200) and 235 kDa (MBP 235), that can be reduced into a single active ligand-binding species with intermediate mobility (MBP 200R). As to expression, expressed in peripheral blood leukocytes &gt; bone marrow = spleen &gt; lymph node, and only faintly visible in appendix and thymus. Expressed in the brain, heart, kidney, liver, lung, pancreas, and placenta. Expressed primarily by reticuloendothelial cells: monocytes, macrophages, and endothelial cells. Expressed in atherosclerotic lesion foam cells.

It localises to the cell membrane. Its function is as follows. Macrophage receptor that binds to the apolipoprotein B48 (APOB) of dietary triglyceride (TG)-rich lipoproteins (TRL) or to a like domain of APOB in hypertriglyceridemic very low density lipoprotein (HTG-VLDL). Binds and internalizes TRL when out of the context of the macrophage. May provide essential lipids to reticuloendothelial cells. Could also be involved in foam cell formation with elevated TRL and remnant lipoprotein (RLP). Mediates the rapid high-affinity uptake of chylomicrons (CM), HTG-VLDL, and trypsinized (tryp) VLDL devoid of APOE in vitro in macrophages. This is Apolipoprotein B receptor from Homo sapiens (Human).